The chain runs to 337 residues: Pseudouridine-5'-phosphate glycosidase (337 aa).

The active-site Proton donor is the Glu26. The substrate site is built by Lys87 and Val107. Asp139 is a binding site for Mn(2+). Substrate is bound at residue 141–143 (SAD). Lys160 serves as the catalytic Nucleophile. Residues 306 to 325 (SSGPQAGAGAPGAEPGPARR) are compositionally biased toward low complexity. The disordered stretch occupies residues 306-337 (SSGPQAGAGAPGAEPGPARRTSPARAPSGEGW).

Belongs to the pseudouridine-5'-phosphate glycosidase family. In terms of assembly, homotrimer. The cofactor is Mn(2+).

The catalysed reaction is D-ribose 5-phosphate + uracil = psi-UMP + H2O. In terms of biological role, catalyzes the reversible cleavage of pseudouridine 5'-phosphate (PsiMP) to ribose 5-phosphate and uracil. Functions biologically in the cleavage direction, as part of a pseudouridine degradation pathway. The sequence is that of Pseudouridine-5'-phosphate glycosidase from Methylobacterium nodulans (strain LMG 21967 / CNCM I-2342 / ORS 2060).